Consider the following 149-residue polypeptide: Large ribosomal subunit protein bL9 (149 aa).

Belongs to the bacterial ribosomal protein bL9 family.

Functionally, binds to the 23S rRNA. This chain is Large ribosomal subunit protein bL9, found in Bacillus licheniformis (strain ATCC 14580 / DSM 13 / JCM 2505 / CCUG 7422 / NBRC 12200 / NCIMB 9375 / NCTC 10341 / NRRL NRS-1264 / Gibson 46).